Consider the following 452-residue polypeptide: Rhodopsin (452 aa).

Residues 1 to 33 are Extracellular-facing; the sequence is MGRDIPDNETWWYNPYMDIHPHWKQFDQVPAAV. N-linked (GlcNAc...) asparagine glycosylation is present at asparagine 8. The chain crosses the membrane as a helical span at residues 34–58; sequence YYSLGIFIAICGIIGCVGNGVVIYL. Over 59-70 the chain is Cytoplasmic; sequence FTKTKSLQTPAN. The helical transmembrane segment at 71–97 threads the bilayer; that stretch reads MFIINLAFSDFTFSLVNGFPLMTISCF. Topologically, residues 98 to 109 are extracellular; that stretch reads MKYWVFGNAACK. A disulfide bond links cysteine 108 and cysteine 186. A helical membrane pass occupies residues 110–131; sequence VYGLIGGIFGLMSIMTMTMISI. A 'Ionic lock' involved in activated form stabilization motif is present at residues 132 to 134; the sequence is DRY. Topologically, residues 132–151 are cytoplasmic; that stretch reads DRYNVIGRPMSASKKMSHRK. The chain crosses the membrane as a helical span at residues 152–172; sequence AFIMIIFVWIWSTIWAIGPIF. Residues 173–199 lie on the Extracellular side of the membrane; the sequence is GWGAYTLEGVLCNCSFDYITRDTTTRS. A helical transmembrane segment spans residues 200–224; it reads NILCMYIFAFMCPIVVIFFCYFNIV. The Cytoplasmic portion of the chain corresponds to 225–261; the sequence is MSVSNHEKEMAAMAKRLNAKELRKAQAGANAEMKLAK. A helical transmembrane segment spans residues 262-283; it reads ISIVIVTQFLLSWSPYAVVALL. Residues 284–293 are Extracellular-facing; that stretch reads AQFGPIEWVT. The chain crosses the membrane as a helical span at residues 294 to 315; it reads PYAAQLPVMFAKASAIHNPMIY. Lysine 305 bears the N6-(retinylidene)lysine mark. Residues 316-452 are Cytoplasmic-facing; sequence SVSHPKFRER…QGVDNQAYQA (137 aa). Residues cysteine 336 and cysteine 337 are each lipidated (S-palmitoyl cysteine). 2 disordered regions span residues 346-365 and 376-452; these read DDKD…GETA and MMQK…AYQA. Residues 376–388 show a composition bias toward low complexity; it reads MMQKMQAQQQQQP. Residues 389-440 show a composition bias toward pro residues; that stretch reads AYPPQGYPPQGYPPPPPQGYPPQGYPPQGYPPQGYPPPPQGPPPQGPPPQAA.

It belongs to the G-protein coupled receptor 1 family. Opsin subfamily. Post-translationally, contains one covalently linked retinal chromophore. Upon light absorption, the covalently bound 11-cis-retinal is converted to all-trans-retinal. After hydrolysis of the Schiff base and release of the covalently bound all-trans-retinal, active rhodopsin is regenerated by binding of a fresh molecule of 11-cis-retinal.

It is found in the cell projection. Its subcellular location is the rhabdomere membrane. Its function is as follows. Photoreceptor required for image-forming vision at low light intensity. Light-induced isomerization of 11-cis to all-trans retinal triggers a conformational change that activates signaling via G-proteins. Signaling mediates the activation of phospholipase C. Subsequent receptor phosphorylation mediates displacement of the bound G-protein alpha subunit by arrestin and terminates signaling. This chain is Rhodopsin (RHO), found in Loligo forbesii (Veined squid).